A 124-amino-acid polypeptide reads, in one-letter code: Alpha-amylase inhibitor 0.53 (124 aa).

4 disulfide bridges follow: Cys20–Cys41, Cys28–Cys83, Cys42–Cys99, and Cys54–Cys115.

This sequence belongs to the protease inhibitor I6 (cereal trypsin/alpha-amylase inhibitor) family. Homodimer. The disulfide bonds are essential for the inhibitor activity. Endosperm.

The protein localises to the secreted. Its function is as follows. Alpha-amylase inhibitor. The protein is Alpha-amylase inhibitor 0.53 of Triticum aestivum (Wheat).